The primary structure comprises 341 residues: MTYRDAGVDIDAGNALVERIKPLVKRSFRPEVMGGLGGFGALFDLSGKYKEPVLVSGTDGVGTKLKLAQQLGRHDTIGIDLVGMCVNDVLVQGAEPLFFLDYFATGKLDIDTAAAVVGGIARGCELSGCALIGGETAEMPDMYPPGEYDLAGFTVGAVEKSQLLDGAQVREGDVLIGIASSGPHSNGYSLIRKIYERAGAPADLVLDDGVALIDALMAPTALYVKPILALLKSHGEAIHAMAHVTGGGLTENIIRVIPDGLGLDIDATAWILPPVFAWLQREGAVADAEMWRTFNCGIGFVLVAAPAQAAALEQALDAQSLAHWRIGQVVTAQGDERVRIG.

The protein belongs to the AIR synthase family.

It is found in the cytoplasm. It catalyses the reaction 2-formamido-N(1)-(5-O-phospho-beta-D-ribosyl)acetamidine + ATP = 5-amino-1-(5-phospho-beta-D-ribosyl)imidazole + ADP + phosphate + H(+). It participates in purine metabolism; IMP biosynthesis via de novo pathway; 5-amino-1-(5-phospho-D-ribosyl)imidazole from N(2)-formyl-N(1)-(5-phospho-D-ribosyl)glycinamide: step 2/2. In Xanthomonas campestris pv. campestris (strain B100), this protein is Phosphoribosylformylglycinamidine cyclo-ligase.